The following is a 291-amino-acid chain: Pre-mRNA-splicing factor SPP381 (291 aa).

2 disordered regions span residues 1–99 and 239–266; these read MSFR…PLPR and EKEKLDHKKQRSAEKVEKSHNNNRYKIT. Polar residues-rich tracts occupy residues 28–41 and 52–62; these read QNVSLTEKSASLSH and TGKNRTPNDGQ. Over residues 63–91 the composition is skewed to acidic residues; sequence ESNESDGSPESDESPESEESSDNSDSSDS. Over residues 239–258 the composition is skewed to basic and acidic residues; that stretch reads EKEKLDHKKQRSAEKVEKSH.

Belongs to the SPP381 family. As to quaternary structure, component of the U4/U6-U5 tri-snRNP complex composed of the U4, U6 and U5 snRNAs and at least PRP3, PRP4, PRP6, PRP8, PRP18, PRP31, PRP38, SNU13, SNU23, SNU66, SNU114, SPP381, SMB1, SMD1, SMD2, SMD3, SMX2, SMX3, LSM2, LSM3, LSM4, LSM5, LSM6, LSM7, LSM8, BRR2 and DIB1. Interacts with PRP38.

The protein localises to the nucleus. Component of the spliceosome and rRNA processing machinery. In association with the spliceosomal U4/U6.U5 tri-snRNP particle, required for splicing of pre-mRNA. This is Pre-mRNA-splicing factor SPP381 (SPP381) from Saccharomyces cerevisiae (strain ATCC 204508 / S288c) (Baker's yeast).